Here is a 136-residue protein sequence, read N- to C-terminus: Small ribosomal subunit protein uS8 (136 aa).

It belongs to the universal ribosomal protein uS8 family. In terms of assembly, part of the 30S ribosomal subunit. Contacts proteins S5 and S12.

In terms of biological role, one of the primary rRNA binding proteins, it binds directly to 16S rRNA central domain where it helps coordinate assembly of the platform of the 30S subunit. The polypeptide is Small ribosomal subunit protein uS8 (Synechococcus sp. (strain JA-2-3B'a(2-13)) (Cyanobacteria bacterium Yellowstone B-Prime)).